The following is a 379-amino-acid chain: MTAESQQSPTRATAAGAGLQQTSGFTMPVVKVEKDPAPEASMSNGGSEVDDTHKGRRRKRPLQKGKPPYSYIALIAMSIANSADRKLTLGGIYKFITERFPFYRDNSKKWQNSIRHNLTLNDCFIKIPREPGRPGKGNYWALDPNAEDMFDSGSFLRRRKRFKRTDLTTYPAYIHDTSMFSPLQVARATYPNTVYPNMTMSPNYSQQIAPHSSVYYPSSSPAFSSAQPRVFSINTLIGHSGSEHAQPPNRSISPEVNSTSSSSCNYGGSAYSSQAGSGTMLPRSTNPVPYSYSVPNSHLQMNQSTYTHSNAQLFGSASRLPMPTSPPMNSDTVDFYGRMSPGQYTSLATYNSNGQLGGTNAYLRHATYSGNMERFVPAV.

A compositionally biased stretch (polar residues) spans 1–11 (MTAESQQSPTR). Residues 1-65 (MTAESQQSPT…RRRKRPLQKG (65 aa)) are disordered. Positions 54-63 (KGRRRKRPLQ) are enriched in basic residues. The fork-head DNA-binding region spans 66–160 (KPPYSYIALI…DSGSFLRRRK (95 aa)). Residues 239–265 (HSGSEHAQPPNRSISPEVNSTSSSSCN) are disordered. The segment covering 251-265 (SISPEVNSTSSSSCN) has biased composition (low complexity).

In terms of tissue distribution, first expressed at late neural tube and early tailbud stages in the hypophyseal placode. Expression continues in the developing pituitary at late tailbud stages. As development progresses, expressed in the mesoderm of the branchial arches. At stage 38, expressed in the developing thyroid and in the pharyngeal endoderm.

The protein localises to the nucleus. In terms of biological role, transcription factor that binds consensus sites on a variety of gene promoters and activate their transcription. The protein is Forkhead box protein E1 of Xenopus laevis (African clawed frog).